An 87-amino-acid polypeptide reads, in one-letter code: Phosphoribosyl-ATP pyrophosphatase (87 aa).

Belongs to the PRA-PH family.

It localises to the cytoplasm. It catalyses the reaction 1-(5-phospho-beta-D-ribosyl)-ATP + H2O = 1-(5-phospho-beta-D-ribosyl)-5'-AMP + diphosphate + H(+). It participates in amino-acid biosynthesis; L-histidine biosynthesis; L-histidine from 5-phospho-alpha-D-ribose 1-diphosphate: step 2/9. The sequence is that of Phosphoribosyl-ATP pyrophosphatase from Beutenbergia cavernae (strain ATCC BAA-8 / DSM 12333 / CCUG 43141 / JCM 11478 / NBRC 16432 / NCIMB 13614 / HKI 0122).